Reading from the N-terminus, the 497-residue chain is Arginine/ornithine antiporter ArcD2 (497 aa).

13 consecutive transmembrane segments (helical) span residues 8 to 28 (GISL…GGVF), 41 to 61 (GGVV…VLSF), 88 to 108 (FLSG…FAVL), 127 to 147 (SLTI…MLLV), 160 to 180 (IVMI…IILF), 220 to 240 (IKGS…ATMM), 255 to 275 (VIGL…PYGY), 297 to 317 (VGGW…LGAW), 354 to 374 (LLIT…VANA), 378 to 398 (FIYM…AYLF), 406 to 426 (SVKN…ALYL), 429 to 449 (WQYV…FIGA), and 462 to 482 (WLGM…LICG).

It belongs to the amino acid-polyamine-organocation (APC) superfamily. Basic amino acid/polyamine antiporter (APA) (TC 2.A.3.2) family.

It is found in the cell membrane. It catalyses the reaction L-ornithine(in) + L-arginine(out) = L-ornithine(out) + L-arginine(in). In terms of biological role, catalyzes electroneutral exchange between L-arginine and L-ornithine. Can also efficiently translocate L-alanine. May function in vivo as a L-arginine/L-alanine exchanger in a pathway together with the arcT gene, which is found adjacent to the arcD2 gene in the ADI gene cluster. The polypeptide is Arginine/ornithine antiporter ArcD2 (Lactococcus lactis subsp. cremoris (strain MG1363)).